Reading from the N-terminus, the 208-residue chain is uncharacterized protein (208 aa).

Residues 4-71 (DYYAILNITP…SRRAQYDRES (68 aa)) enclose the J domain. The interval 67–100 (YDRESASSSAKPRQSFFSRTNPQPQSQSQQGGPS) is disordered. Over residues 72-87 (ASSSAKPRQSFFSRTN) the composition is skewed to polar residues. Low complexity predominate over residues 88-100 (PQPQSQSQQGGPS). A helical membrane pass occupies residues 127-147 (GIANAFWTIVGTLAGAALGFI).

The protein belongs to the DnaJ family.

The protein localises to the endoplasmic reticulum membrane. This is an uncharacterized protein from Schizosaccharomyces pombe (strain 972 / ATCC 24843) (Fission yeast).